The following is an 82-amino-acid chain: Immediate early response 3-interacting protein 1 (82 aa).

2 consecutive transmembrane segments (helical) span residues 2–22 (AFTLYTLLQAALLCVNAVAVL) and 62–82 (VMRVPLIIVNSVTIVLLLLFG).

Belongs to the YOS1 family.

It localises to the endoplasmic reticulum membrane. In terms of biological role, regulator of endoplasmic reticulum secretion that acts as a key determinant of brain size. Required for secretion of extracellular matrix proteins. Required for correct brain development by depositing sufficient extracellular matrix proteins for tissue integrity and the proliferation of neural progenitors. Acts as a regulator of the unfolded protein response (UPR). The polypeptide is Immediate early response 3-interacting protein 1 (Xenopus laevis (African clawed frog)).